The chain runs to 343 residues: N-acetyl-gamma-glutamyl-phosphate reductase (343 aa).

C146 is an active-site residue.

The protein belongs to the NAGSA dehydrogenase family. Type 1 subfamily.

It is found in the cytoplasm. It catalyses the reaction N-acetyl-L-glutamate 5-semialdehyde + phosphate + NADP(+) = N-acetyl-L-glutamyl 5-phosphate + NADPH + H(+). The protein operates within amino-acid biosynthesis; L-arginine biosynthesis; N(2)-acetyl-L-ornithine from L-glutamate: step 3/4. Functionally, catalyzes the NADPH-dependent reduction of N-acetyl-5-glutamyl phosphate to yield N-acetyl-L-glutamate 5-semialdehyde. This is N-acetyl-gamma-glutamyl-phosphate reductase from Paenarthrobacter aurescens (strain TC1).